The primary structure comprises 307 residues: Phosphoribosylaminoimidazole-succinocarboxamide synthase (307 aa).

It belongs to the SAICAR synthetase family.

The enzyme catalyses 5-amino-1-(5-phospho-D-ribosyl)imidazole-4-carboxylate + L-aspartate + ATP = (2S)-2-[5-amino-1-(5-phospho-beta-D-ribosyl)imidazole-4-carboxamido]succinate + ADP + phosphate + 2 H(+). Its pathway is purine metabolism; IMP biosynthesis via de novo pathway; 5-amino-1-(5-phospho-D-ribosyl)imidazole-4-carboxamide from 5-amino-1-(5-phospho-D-ribosyl)imidazole-4-carboxylate: step 1/2. The protein is Phosphoribosylaminoimidazole-succinocarboxamide synthase of Thermobifida fusca (strain YX).